A 302-amino-acid polypeptide reads, in one-letter code: Succinate--CoA ligase [ADP-forming] subunit alpha (302 aa).

CoA contacts are provided by residues 17 to 20 (TGST), K43, and 96 to 98 (ITE). Substrate is bound at residue Y159. H247 serves as the catalytic Tele-phosphohistidine intermediate.

Belongs to the succinate/malate CoA ligase alpha subunit family. In terms of assembly, heterotetramer of two alpha and two beta subunits.

The enzyme catalyses succinate + ATP + CoA = succinyl-CoA + ADP + phosphate. The catalysed reaction is GTP + succinate + CoA = succinyl-CoA + GDP + phosphate. The protein operates within carbohydrate metabolism; tricarboxylic acid cycle; succinate from succinyl-CoA (ligase route): step 1/1. Its function is as follows. Succinyl-CoA synthetase functions in the citric acid cycle (TCA), coupling the hydrolysis of succinyl-CoA to the synthesis of either ATP or GTP and thus represents the only step of substrate-level phosphorylation in the TCA. The alpha subunit of the enzyme binds the substrates coenzyme A and phosphate, while succinate binding and nucleotide specificity is provided by the beta subunit. This is Succinate--CoA ligase [ADP-forming] subunit alpha from Staphylococcus aureus (strain MRSA252).